The following is a 156-amino-acid chain: Small ribosomal subunit protein uS7 (156 aa).

It belongs to the universal ribosomal protein uS7 family. As to quaternary structure, part of the 30S ribosomal subunit. Contacts proteins S9 and S11.

In terms of biological role, one of the primary rRNA binding proteins, it binds directly to 16S rRNA where it nucleates assembly of the head domain of the 30S subunit. Is located at the subunit interface close to the decoding center, probably blocks exit of the E-site tRNA. This Rhodopseudomonas palustris (strain BisB5) protein is Small ribosomal subunit protein uS7.